Here is a 329-residue protein sequence, read N- to C-terminus: Chloroplast envelope quinone oxidoreductase homolog (329 aa).

Arginine 58 contacts substrate.

Belongs to the zinc-containing alcohol dehydrogenase family. Quinone oxidoreductase subfamily. Homodimer or homotetramer. Transition to monomer upon NADPH binding. Interacts with calmodulin. Interacts with HP30-1, HP30-2 and HP20.

Its subcellular location is the plastid. The protein resides in the chloroplast inner membrane. In terms of biological role, NADPH-dependent alpha,beta-unsaturated oxoene reductase reducing the double bond of medium-chain (C9) to long-chain (C18) reactive electrophile species deriving from poly-unsaturated fatty acid peroxides. The best substrates are 13-lipoxygenase-derived gamma-ketols, but is unable to reduce the double bond of short-chain alkenals and alkenones such as acrolein, crotonaldehyde, 3-buten-2-one, 4-hexen-3-one and trans-2-hexenal, or quinones such as duroquinone, decylubiquinone, coenzyme Q0, menadione, menaquinone and phylloquinone. Can use trans-2-nonenal, trans-3-decen-2-one, 4-hydroxynonenal, 12-oxo-10(E) dodecanoate (traumatin), 4-oxononenal, trans-1,3 diphenyl-2-propenone, trans-1,4-diphenyl-2-butene-1,4-dione, 9-oxo-12,13-epoxy-(10E)-octadecenoic acid (trans-EKODE-1b), 9-hydroxy-12-oxo-10(E)-octadecenoic acid, 9-Hydroxy-12-oxo-10(E),15(Z)-octadecadienoic acid and 9,13-dihydroxy-10-oxo-11-octadecenoic acid as substrates, but has no activity with 13(R,S)-hydroperoxy-9(Z),11(E)-octadecadienoic acid (13-HPOD), 9(S),12(S),13(S)-trihydroxy-10(E)-octadecenoic acid, 13-hydroxy-12-oxo-9(Z)-octadecenoic acid, 9-oxo-10(E),12(Z)-octadecadienoic acid (9-KODE), 13-oxo-9(Z),11(E)-octadecadienoic acid (13-KODE) and 12-oxo-10,15(Z)-phytodienoic acid (12-OPDA). This Arabidopsis thaliana (Mouse-ear cress) protein is Chloroplast envelope quinone oxidoreductase homolog.